The following is a 1322-amino-acid chain: Chitin synthase chs-1 (1322 aa).

The Extracellular segment spans residues 1–39; that stretch reads MNDGENYWNAFRSHKRSATDGPTLSPWMVTVLQATKLLL. A helical membrane pass occupies residues 40–60; sequence FALCNIVLTLGSVFSKLIVLI. The Cytoplasmic segment spans residues 61-128; sequence MATNIVPRAH…KGQCGQLVKS (68 aa). Residues 129 to 149 traverse the membrane as a helical segment; sequence VVVLESLRAIGLAVLSFHVFP. Residues 150-156 are Extracellular-facing; that stretch reads QLDLARC. A helical transmembrane segment spans residues 157 to 177; the sequence is LVLSACFPLVAVLQRSLVAMV. Residues 178–193 are Cytoplasmic-facing; it reads SAARTGRSFRNRLGRC. Residues 194 to 214 traverse the membrane as a helical segment; the sequence is FVAIPHVIMFLVLMSSCYVWA. At 215–221 the chain is on the extracellular side; that stretch reads LFDNKFT. Residues 222 to 242 traverse the membrane as a helical segment; that stretch reads AIIALPIGVICTSAGFWESWI. The Cytoplasmic segment spans residues 243–269; it reads DTTHSGTSFDELYRLKYAVRKMNTTTK. Residues 270 to 290 traverse the membrane as a helical segment; sequence LIVSLMRIVCTVSVLVSAVYI. Residues 291–316 are Extracellular-facing; the sequence is NDHKKLNSSHFVKAFFSFSTRQPHTR. N-linked (GlcNAc...) asparagine glycosylation occurs at Asn297. A helical transmembrane segment spans residues 317–337; sequence LLLLATGIIVLHFVMRGISRF. The Cytoplasmic portion of the chain corresponds to 338–342; that stretch reads LAALD. A helical transmembrane segment spans residues 343–363; the sequence is LHPFSFVHPLSIAPLIAYGYV. The Extracellular portion of the chain corresponds to 364–396; the sequence is RYACQSPTCSIARRLARFGLHWVCDQWFQSARG. A helical membrane pass occupies residues 397–417; it reads IASPDFYICLIWLLVGCYRGW. At 418-836 the chain is on the cytoplasmic side; the sequence is RLVRQRYFDT…AISYAYIAYQ (419 aa). Positions 455–486 form a coiled coil; that stretch reads LNRQEKTMLTEEEDISDENDELRIRNDEVDRV. A helical transmembrane segment spans residues 837 to 857; sequence FLVIFFSMLGPAIIFTMLVFA. Residues 858–865 are Extracellular-facing; it reads QVAAFELR. A helical transmembrane segment spans residues 866-886; that stretch reads GSDVMLYNGIPIGFFIVLCFT. Residues 887–892 are Cytoplasmic-facing; it reads TESNIQ. A helical transmembrane segment spans residues 893 to 913; it reads LIYAKYMSIAYAFVMLAVLVA. The Extracellular segment spans residues 914–922; it reads TSSQIVLET. Residues 923-943 traverse the membrane as a helical segment; it reads VLAPTSLFIVTMVGIFFFAAC. Topologically, residues 944–951 are cytoplasmic; it reads LHPKEFTN. The helical transmembrane segment at 952–972 threads the bilayer; the sequence is IIHGVVFFLMIPSTYVFLTLY. The Extracellular segment spans residues 973 to 1148; the sequence is SLINLNVITW…AVAEGLASLR (176 aa). A coiled-coil region spans residues 1019 to 1053; it reads ISCREKKEHEERREKMEKKMQRMELALRSIESGAD. The chain crosses the membrane as a helical span at residues 1149–1169; it reads NQIAFTILLVNSLLALAIFLI. Residues 1170-1209 are Cytoplasmic-facing; that stretch reads QKHKNVLSIKFSPIKNFRWTKMNEMTGQYEETDEPLKIDP. Residues 1210–1230 traverse the membrane as a helical segment; it reads LGMGIVVFLLIILFVQTLGML. The Extracellular segment spans residues 1231–1322; the sequence is LHRLNTMIGA…MQRSALSTTE (92 aa).

Belongs to the chitin synthase family. Class IV subfamily.

It is found in the cell membrane. The enzyme catalyses [(1-&gt;4)-N-acetyl-beta-D-glucosaminyl](n) + UDP-N-acetyl-alpha-D-glucosamine = [(1-&gt;4)-N-acetyl-beta-D-glucosaminyl](n+1) + UDP + H(+). Its function is as follows. Essential for the embryonic synthesis of chitin, a component of the eggshell. The protein is Chitin synthase chs-1 of Caenorhabditis elegans.